The following is a 610-amino-acid chain: V-type proton ATPase catalytic subunit A (610 aa).

Residue 245 to 252 (GAFGCGKT) participates in ATP binding.

This sequence belongs to the ATPase alpha/beta chains family. As to quaternary structure, V-ATPase is a heteromultimeric enzyme composed of a peripheral catalytic V1 complex (main components: subunits A, B, C, D, E, and F) attached to an integral membrane V0 proton pore complex (main component: the proteolipid protein).

It catalyses the reaction ATP + H2O + 4 H(+)(in) = ADP + phosphate + 5 H(+)(out). Functionally, catalytic subunit of the peripheral V1 complex of vacuolar ATPase. V-ATPase vacuolar ATPase is responsible for acidifying a variety of intracellular compartments in eukaryotic cells. This Trypanosoma congolense protein is V-type proton ATPase catalytic subunit A.